The sequence spans 1116 residues: Error-prone DNA polymerase (1116 aa).

This sequence belongs to the DNA polymerase type-C family. DnaE2 subfamily.

The protein resides in the cytoplasm. It catalyses the reaction DNA(n) + a 2'-deoxyribonucleoside 5'-triphosphate = DNA(n+1) + diphosphate. Functionally, DNA polymerase involved in damage-induced mutagenesis and translesion synthesis (TLS). It is not the major replicative DNA polymerase. The polypeptide is Error-prone DNA polymerase (Sinorhizobium medicae (strain WSM419) (Ensifer medicae)).